Consider the following 269-residue polypeptide: MIEQQAGSRIRVEALAVGGQEQAAQWAQRLGLPLTDAHADFALQLTDEGLQLQQLGDDAPGAVRVDFVEGAVAHRRLFGGGTGQMIAKAVGIQPGIRPSVLDATAGLGKDAFVLASLGCDMSLIERQPIIAALLEDGLARGRGDRDVGSIIARMRLLTGNSIDLIRAWTGEPPQVIYLDPMFPHREKTALVKKEMRLFRPLVGDDMDAPALLEAALALATHRVVVKRPRKAPCIDGLKPGYALDGKSSRYDIYPKKALKPKAATDESGA.

Residues 125–126 and D179 each bind S-adenosyl-L-methionine; that span reads ER.

It belongs to the methyltransferase superfamily. RsmJ family.

It is found in the cytoplasm. The catalysed reaction is guanosine(1516) in 16S rRNA + S-adenosyl-L-methionine = N(2)-methylguanosine(1516) in 16S rRNA + S-adenosyl-L-homocysteine + H(+). Functionally, specifically methylates the guanosine in position 1516 of 16S rRNA. This Pseudomonas syringae pv. syringae (strain B728a) protein is Ribosomal RNA small subunit methyltransferase J.